The primary structure comprises 261 residues: tRNA pseudouridine synthase A (261 aa).

Catalysis depends on Asp-51, which acts as the Nucleophile. Residue Tyr-109 participates in substrate binding.

It belongs to the tRNA pseudouridine synthase TruA family. Homodimer.

The catalysed reaction is uridine(38/39/40) in tRNA = pseudouridine(38/39/40) in tRNA. Its function is as follows. Formation of pseudouridine at positions 38, 39 and 40 in the anticodon stem and loop of transfer RNAs. This chain is tRNA pseudouridine synthase A, found in Shewanella amazonensis (strain ATCC BAA-1098 / SB2B).